A 186-amino-acid polypeptide reads, in one-letter code: Peptidyl-tRNA hydrolase (186 aa).

Residue Y14 coordinates tRNA. Residue H19 is the Proton acceptor of the active site. TRNA is bound by residues Y61, N63, and N107.

This sequence belongs to the PTH family. As to quaternary structure, monomer.

It localises to the cytoplasm. The enzyme catalyses an N-acyl-L-alpha-aminoacyl-tRNA + H2O = an N-acyl-L-amino acid + a tRNA + H(+). Hydrolyzes ribosome-free peptidyl-tRNAs (with 1 or more amino acids incorporated), which drop off the ribosome during protein synthesis, or as a result of ribosome stalling. In terms of biological role, catalyzes the release of premature peptidyl moieties from peptidyl-tRNA molecules trapped in stalled 50S ribosomal subunits, and thus maintains levels of free tRNAs and 50S ribosomes. The protein is Peptidyl-tRNA hydrolase of Helicobacter pylori (strain HPAG1).